The following is a 76-amino-acid chain: DNA gyrase inhibitor YacG (76 aa).

Cys-20, Cys-23, Cys-39, and Cys-43 together coordinate Zn(2+). Positions Glu-54–Tyr-76 are disordered. Residues Ser-65 to Tyr-76 show a composition bias toward acidic residues.

This sequence belongs to the DNA gyrase inhibitor YacG family. As to quaternary structure, interacts with GyrB. Zn(2+) is required as a cofactor.

Its function is as follows. Inhibits all the catalytic activities of DNA gyrase by preventing its interaction with DNA. Acts by binding directly to the C-terminal domain of GyrB, which probably disrupts DNA binding by the gyrase. The polypeptide is DNA gyrase inhibitor YacG (Photobacterium profundum (strain SS9)).